The sequence spans 320 residues: Malate dehydrogenase (320 aa).

NAD(+) contacts are provided by residues 8 to 13 (GAGQIG) and aspartate 33. 2 residues coordinate substrate: arginine 82 and arginine 88. Residues asparagine 95 and 118–120 (ITN) each bind NAD(+). The substrate site is built by asparagine 120 and arginine 151. The active-site Proton acceptor is the histidine 175.

The protein belongs to the LDH/MDH superfamily. MDH type 3 family.

It carries out the reaction (S)-malate + NAD(+) = oxaloacetate + NADH + H(+). Catalyzes the reversible oxidation of malate to oxaloacetate. This is Malate dehydrogenase from Pelagibacter ubique (strain HTCC1062).